The sequence spans 660 residues: Pentatricopeptide repeat-containing protein At4g20090 (660 aa).

PPR repeat units lie at residues 76-110, 111-141, 147-181, 186-220, 221-255, 256-290, 291-325, 326-360, 361-395, 396-430, 431-465, 466-500, 501-535, 539-573, and 574-609; these read GDSTLSSMIESYANSGDFDSVEKLLSRIRLENRVI, IERSFIVVFRAYGKAHLPDKAVDLFHRMVDE, SVKSFNSVLNVIINEGLYHRGLEFYDYVVNSNMNM, NGLSFNLVIKALCKLRFVDRAIEVFRGMPERKCLP, DGYTYCTLMDGLCKEERIDEAVLLLDEMQSEGCSP, SPVIYNVLIDGLCKKGDLTRVTKLVDNMFLKGCVP, NEVTYNTLIHGLCLKGKLDKAVSLLERMVSSKCIP, NDVTYGTLINGLVKQRRATDAVRLLSSMEERGYHL, NQHIYSVLISGLFKEGKAEEAMSLWRKMAEKGCKP, NIVVYSVLVDGLCREGKPNEAKEILNRMIASGCLP, NAYTYSSLMKGFFKTGLCEEAVQVWKEMDKTGCSR, NKFCYSVLIDGLCGVGRVKEAMMVWSKMLTIGIKP, DTVAYSSIIKGLCGIGSMDAALKLYHEMLCQEEPK, DVVTYNILLDGLCMQKDISRAVDLLNSMLDRGCDP, and DVITCNTFLNTLSEKSNSCDKGRSFLEELVVRLLKR.

This sequence belongs to the PPR family. P subfamily.

May play a role in embryogenesis. In Arabidopsis thaliana (Mouse-ear cress), this protein is Pentatricopeptide repeat-containing protein At4g20090 (EMB1025).